We begin with the raw amino-acid sequence, 531 residues long: L-aspartate oxidase (531 aa).

Residues 11 to 14, lysine 33, 40 to 47, 151 to 152, and aspartate 205 each bind FAD; these read SGAA, NSVYAQGG, and TA. Arginine 272 (proton donor/acceptor) is an active-site residue. Residues glutamate 353 and 369–370 contribute to the FAD site; that span reads SL.

This sequence belongs to the FAD-dependent oxidoreductase 2 family. NadB subfamily. Monomer. Homodimer. It depends on FAD as a cofactor.

It is found in the cytoplasm. The catalysed reaction is L-aspartate + O2 = iminosuccinate + H2O2. It catalyses the reaction fumarate + L-aspartate = iminosuccinate + succinate. Its pathway is cofactor biosynthesis; NAD(+) biosynthesis; iminoaspartate from L-aspartate (oxidase route): step 1/1. Functionally, catalyzes the oxidation of L-aspartate to iminoaspartate, the first step in the de novo biosynthesis of NAD(+). Can use either oxygen or fumarate as electron acceptors, which allows the enzyme to be functional under aerobic and anaerobic conditions. In Bacillus subtilis (strain 168), this protein is L-aspartate oxidase.